The sequence spans 385 residues: Putative ESX-1 scaffolding and assembly protein SaeC (385 aa).

It localises to the cytoplasm. Functionally, may be involved in assembly of the ESX-1 / type VII specialized secretion system (T7SS), which exports several proteins including EsxA and EsxB. Involved in DNA conjugation in recipient (MKD8) strain. The protein is Putative ESX-1 scaffolding and assembly protein SaeC of Mycolicibacterium smegmatis (strain ATCC 700084 / mc(2)155) (Mycobacterium smegmatis).